We begin with the raw amino-acid sequence, 91 residues long: Transcription factor ILI7 (91 aa).

Residues 4–58 enclose the bHLH domain; that stretch reads RSRSRASSAARITDEQIGDLVSKLQALLPEARLRSNDRVPSARVLQETCSYIRSL.

The protein belongs to the bHLH protein family.

Its function is as follows. Atypical and probable non DNA-binding bHLH transcription factor that integrates multiple signaling pathways to regulate cell elongation and plant development. This Oryza sativa subsp. indica (Rice) protein is Transcription factor ILI7 (ILI7).